We begin with the raw amino-acid sequence, 385 residues long: Cell division protein FtsZ (385 aa).

GTP is bound by residues 20–24 (GGGGN), 107–109 (GTG), E138, R142, and N186.

It belongs to the FtsZ family. As to quaternary structure, homodimer. Polymerizes to form a dynamic ring structure in a strictly GTP-dependent manner. Interacts directly with several other division proteins.

The protein resides in the cytoplasm. Essential cell division protein that forms a contractile ring structure (Z ring) at the future cell division site. The regulation of the ring assembly controls the timing and the location of cell division. One of the functions of the FtsZ ring is to recruit other cell division proteins to the septum to produce a new cell wall between the dividing cells. Binds GTP and shows GTPase activity. The chain is Cell division protein FtsZ from Buchnera aphidicola subsp. Baizongia pistaciae (strain Bp).